Consider the following 179-residue polypeptide: Large ribosomal subunit protein uL6 (179 aa).

It belongs to the universal ribosomal protein uL6 family. In terms of assembly, part of the 50S ribosomal subunit.

This protein binds to the 23S rRNA, and is important in its secondary structure. It is located near the subunit interface in the base of the L7/L12 stalk, and near the tRNA binding site of the peptidyltransferase center. In Mycobacterium sp. (strain KMS), this protein is Large ribosomal subunit protein uL6.